The sequence spans 310 residues: MIVVTGGAGFIGSNIVKALNQIGYNDVLVVDNLKDGTKYANLVDLNISDYMDKEDFIASIVAGDDFGDIDAVFHEGACSSTTEWDGKYMMDNNYQYSKELLHYCMERTIPFLYASSAATYGGRTEHFIEDRQYEQPLNVYGYSKFLFDQYVRALLPQAESQICGFRYFNVYGPREGHKGGMASVAFHLNNQINAGENPKLFAGSEGFKRDFIYVGDVAAVNLWFWQNNVSGIFNCGTGRAESFQAVSDAVLDYHKKGQLEYIPFPEKLKGRYQAYTQADLTQLRAAGYTQPFKTVAEGVAEYLRWLNHNY.

Residues 10-11, 31-32, lysine 38, lysine 53, 75-79, and asparagine 92 each bind NADP(+); these read FI, DN, and EGACS. The active-site Proton acceptor is the tyrosine 140. Residue lysine 144 coordinates NADP(+). Asparagine 169 lines the substrate pocket. Residues valine 170 and lysine 178 each contribute to the NADP(+) site. Lysine 178 acts as the Proton acceptor in catalysis. Residues glycine 180, histidine 187, 201 to 204, arginine 209, and tyrosine 272 contribute to the substrate site; that span reads FAGS.

Belongs to the NAD(P)-dependent epimerase/dehydratase family. HldD subfamily. In terms of assembly, homopentamer. NADP(+) serves as cofactor.

The enzyme catalyses ADP-D-glycero-beta-D-manno-heptose = ADP-L-glycero-beta-D-manno-heptose. The protein operates within nucleotide-sugar biosynthesis; ADP-L-glycero-beta-D-manno-heptose biosynthesis; ADP-L-glycero-beta-D-manno-heptose from D-glycero-beta-D-manno-heptose 7-phosphate: step 4/4. Its function is as follows. Catalyzes the interconversion between ADP-D-glycero-beta-D-manno-heptose and ADP-L-glycero-beta-D-manno-heptose via an epimerization at carbon 6 of the heptose. This Sodalis glossinidius (strain morsitans) protein is ADP-L-glycero-D-manno-heptose-6-epimerase.